Here is a 166-residue protein sequence, read N- to C-terminus: Endoribonuclease YbeY (166 aa).

3 residues coordinate Zn(2+): His132, His136, and His142.

It belongs to the endoribonuclease YbeY family. Zn(2+) serves as cofactor.

The protein localises to the cytoplasm. In terms of biological role, single strand-specific metallo-endoribonuclease involved in late-stage 70S ribosome quality control and in maturation of the 3' terminus of the 16S rRNA. The chain is Endoribonuclease YbeY from Clostridium botulinum (strain Eklund 17B / Type B).